A 181-amino-acid chain; its full sequence is Cyclic AMP-dependent transcription factor ATF-3 (181 aa).

Residues 76–96 form a disordered region; the sequence is VTKSEVAPEEDERKRRRRERN. Residue Lys78 forms a Glycyl lysine isopeptide (Lys-Gly) (interchain with G-Cter in SUMO2) linkage. Residues 86–149 enclose the bZIP domain; the sequence is DERKRRRRER…QHLIYMLNLH (64 aa). The tract at residues 88–110 is basic motif; that stretch reads RKRRRRERNKIAAAKCRNKKKEK. The segment at 114-142 is leucine-zipper; that stretch reads LQKESEKLESVNAELKAQIEELKNEKQHL. Position 162 is a phosphothreonine (Thr162). Residue Lys175 forms a Glycyl lysine isopeptide (Lys-Gly) (interchain with G-Cter in SUMO2) linkage.

It belongs to the bZIP family. ATF subfamily. ATF3 alone can bind DNA, but it preferentially forms heteromeric complexes with JUN and JUNB and does not interact with FOS. As to expression, expressed in tissues containing skeletal muscle or smooth muscle. Expressed in cutaneous and muscular sensory neurons.

It localises to the nucleus. Its function is as follows. This protein binds the cAMP response element (CRE) (consensus: 5'-GTGACGT[AC][AG]-3'), a sequence present in many viral and cellular promoters. Represses transcription from promoters with ATF sites. It may repress transcription by stabilizing the binding of inhibitory cofactors at the promoter. The chain is Cyclic AMP-dependent transcription factor ATF-3 (Atf3) from Rattus norvegicus (Rat).